We begin with the raw amino-acid sequence, 174 residues long: Ribosome rescue factor SmrB (174 aa).

In terms of domain architecture, Smr spans 96–171 (LDLHGLTQQQ…GDAAILVLIE (76 aa)).

Belongs to the SmrB family. In terms of assembly, associates with collided ribosomes, but not with correctly translating polysomes.

Acts as a ribosome collision sensor. Detects stalled/collided disomes (pairs of ribosomes where the leading ribosome is stalled and a second ribosome has collided with it) and endonucleolytically cleaves mRNA at the 5' boundary of the stalled ribosome. Stalled/collided disomes form a new interface (primarily via the 30S subunits) that binds SmrB. Cleaved mRNA becomes available for tmRNA ligation, leading to ribosomal subunit dissociation and rescue of stalled ribosomes. The chain is Ribosome rescue factor SmrB from Tolumonas auensis (strain DSM 9187 / NBRC 110442 / TA 4).